A 330-amino-acid chain; its full sequence is 4-epi-cubebol synthase ((2E,6E)-farnesyl diphosphate cyclizing) (330 aa).

Mg(2+)-binding residues include Asp91 and Glu96. A DDXXXE motif motif is present at residues 91-96 (DDAFCE). Arg184 provides a ligand contact to substrate. Mg(2+)-binding residues include Asn230 and Ser234. Lys237 contacts substrate. Glu238 serves as a coordination point for Mg(2+). 316 to 317 (RY) contributes to the substrate binding site.

Belongs to the terpene synthase family. The cofactor is Mg(2+).

The catalysed reaction is (2E,6E)-farnesyl diphosphate + H2O = 4-epi-cubebol + diphosphate. It functions in the pathway secondary metabolite biosynthesis; terpenoid biosynthesis. Catalyzes the conversion of (2E,6E)-farnesyl diphosphate (FPP) to yield the bicyclic sesquiterpenol 4-epi-cubebol via a 1,10-cyclization, which requires the abstraction of the pyrophosphate from FPP to yield a (E,E)-germacradienyl cation. The only accepted substrate is (2E,6E)-farnesyl diphosphate (FPP). In Streptosporangium roseum (strain ATCC 12428 / DSM 43021 / JCM 3005 / KCTC 9067 / NCIMB 10171 / NRRL 2505 / NI 9100), this protein is 4-epi-cubebol synthase ((2E,6E)-farnesyl diphosphate cyclizing).